A 63-amino-acid polypeptide reads, in one-letter code: Large ribosomal subunit protein uL29 (63 aa).

It belongs to the universal ribosomal protein uL29 family.

In Vibrio campbellii (strain ATCC BAA-1116), this protein is Large ribosomal subunit protein uL29.